A 332-amino-acid chain; its full sequence is Serpentine receptor class alpha-10 (332 aa).

The Extracellular segment spans residues Met1–Asn26. Residues Val27–Ile47 traverse the membrane as a helical segment. Topologically, residues Leu48 to Thr64 are cytoplasmic. A helical membrane pass occupies residues Ser65 to Ile85. At Arg86 to His109 the chain is on the extracellular side. A helical transmembrane segment spans residues Val110–Ala132. Residues Thr133 to Pro146 lie on the Cytoplasmic side of the membrane. Residues Gly147–Ile167 form a helical membrane-spanning segment. Topologically, residues Gly168 to Val191 are extracellular. The chain crosses the membrane as a helical span at residues Phe192–Phe212. Residues Ala213 to Arg239 are Cytoplasmic-facing. The chain crosses the membrane as a helical span at residues Ile240 to Leu260. Topologically, residues Thr261–Asn276 are extracellular. Residues Ile277–His297 traverse the membrane as a helical segment. Over Arg298–Gly332 the chain is Cytoplasmic.

This sequence belongs to the nematode receptor-like protein sra family.

Its subcellular location is the membrane. This is Serpentine receptor class alpha-10 from Caenorhabditis briggsae.